The primary structure comprises 118 residues: Large ribosomal subunit protein bL17 (118 aa).

It belongs to the bacterial ribosomal protein bL17 family. As to quaternary structure, part of the 50S ribosomal subunit. Contacts protein L32.

This chain is Large ribosomal subunit protein bL17, found in Aster yellows witches'-broom phytoplasma (strain AYWB).